The chain runs to 439 residues: Acyl transferase 7 (439 aa).

The disordered stretch occupies residues M1–P25. Catalysis depends on proton acceptor residues H176 and D383.

This sequence belongs to the plant acyltransferase family.

Involved in the incorporation of ferulate into the cell wall. May act as arabinoxylan feruloyl transferase. In Oryza sativa subsp. japonica (Rice), this protein is Acyl transferase 7.